We begin with the raw amino-acid sequence, 252 residues long: Chlorophyll a-b binding protein P4, chloroplastic (252 aa).

Trp-56 is a chlorophyll b binding site. Residues Phe-76 and Glu-95 each coordinate chlorophyll a. Position 100 (Arg-100) interacts with chlorophyll b. The next 2 membrane-spanning stretches (helical) occupy residues 101-121 (WAML…IGII) and 134-154 (YFAS…YVEI). Residues Ser-137, Val-143, Glu-153, and Arg-156 each contribute to the chlorophyll b site. The chlorophyll a site is built by Lys-203, Glu-204, Asn-207, Arg-209, Gln-221, and His-236.

Belongs to the light-harvesting chlorophyll a/b-binding (LHC) protein family. As to quaternary structure, the LHC complex consists of chlorophyll a-b binding proteins. It depends on Binds at least 14 chlorophylls (8 Chl-a and 6 Chl-b) and carotenoids such as lutein and neoxanthin. as a cofactor. Post-translationally, photoregulated by reversible phosphorylation of its threonine residues.

The protein localises to the plastid. Its subcellular location is the chloroplast thylakoid membrane. Functionally, the light-harvesting complex (LHC) functions as a light receptor, it captures and delivers excitation energy to photosystems with which it is closely associated. In terms of biological role, may channel protons produced in the catalytic Mn center of water oxidation into the thylakoid lumen. In Pisum sativum (Garden pea), this protein is Chlorophyll a-b binding protein P4, chloroplastic.